The sequence spans 244 residues: 6-carboxyhexanoate--CoA ligase (244 aa).

Belongs to the BioW family. In terms of assembly, homodimer. Requires Mg(2+) as cofactor.

The catalysed reaction is heptanedioate + ATP + CoA = 6-carboxyhexanoyl-CoA + AMP + diphosphate. Its pathway is metabolic intermediate metabolism; pimeloyl-CoA biosynthesis; pimeloyl-CoA from pimelate: step 1/1. Catalyzes the transformation of pimelate into pimeloyl-CoA with concomitant hydrolysis of ATP to AMP. The chain is 6-carboxyhexanoate--CoA ligase from Hydrogenobacter thermophilus (strain DSM 6534 / IAM 12695 / TK-6).